A 474-amino-acid chain; its full sequence is Aspartyl/glutamyl-tRNA(Asn/Gln) amidotransferase subunit B (474 aa).

The protein belongs to the GatB/GatE family. GatB subfamily. As to quaternary structure, heterotrimer of A, B and C subunits.

The enzyme catalyses L-glutamyl-tRNA(Gln) + L-glutamine + ATP + H2O = L-glutaminyl-tRNA(Gln) + L-glutamate + ADP + phosphate + H(+). It catalyses the reaction L-aspartyl-tRNA(Asn) + L-glutamine + ATP + H2O = L-asparaginyl-tRNA(Asn) + L-glutamate + ADP + phosphate + 2 H(+). Allows the formation of correctly charged Asn-tRNA(Asn) or Gln-tRNA(Gln) through the transamidation of misacylated Asp-tRNA(Asn) or Glu-tRNA(Gln) in organisms which lack either or both of asparaginyl-tRNA or glutaminyl-tRNA synthetases. The reaction takes place in the presence of glutamine and ATP through an activated phospho-Asp-tRNA(Asn) or phospho-Glu-tRNA(Gln). The protein is Aspartyl/glutamyl-tRNA(Asn/Gln) amidotransferase subunit B of Desulfotalea psychrophila (strain LSv54 / DSM 12343).